A 276-amino-acid polypeptide reads, in one-letter code: 28 kDa ribonucleoprotein, chloroplastic (276 aa).

The transit peptide at 1–57 (MATNGCLISLPPFFTTTKSISSYPFLSTQLKPISLSSSLPTLLSLNKRTTQFPTFVS) directs the protein to the chloroplast. RRM domains follow at residues 97–175 (AKLF…KAAP) and 191–269 (YRIY…AAEE).

It localises to the plastid. The protein localises to the chloroplast. Its function is as follows. Probably involved in the 3'-end processing of chloroplast mRNA's. This is 28 kDa ribonucleoprotein, chloroplastic from Nicotiana sylvestris (Wood tobacco).